A 274-amino-acid chain; its full sequence is 2,3,4,5-tetrahydropyridine-2,6-dicarboxylate N-succinyltransferase (274 aa).

This sequence belongs to the transferase hexapeptide repeat family.

It localises to the cytoplasm. The enzyme catalyses (S)-2,3,4,5-tetrahydrodipicolinate + succinyl-CoA + H2O = (S)-2-succinylamino-6-oxoheptanedioate + CoA. Its pathway is amino-acid biosynthesis; L-lysine biosynthesis via DAP pathway; LL-2,6-diaminopimelate from (S)-tetrahydrodipicolinate (succinylase route): step 1/3. This Klebsiella pneumoniae (strain 342) protein is 2,3,4,5-tetrahydropyridine-2,6-dicarboxylate N-succinyltransferase.